The sequence spans 118 residues: MSLTFYWYPKCGTCRKAKKWLEEHGKEINEIHIAEQPPSKEELKALYEKSGLDLKKFFNTSGMKYRELNLKEKLYHMSEDEQLELLASDGMLIKRPLTTDGEKVTVGFKEDQFEENWA.

Residues C11 and C14 are joined by a disulfide bond.

The protein belongs to the ArsC family.

This is an uncharacterized protein from Bacillus subtilis (strain 168).